Reading from the N-terminus, the 372-residue chain is Probable E3 ubiquitin-protein ligase makorin-1 (372 aa).

2 consecutive C3H1-type zinc fingers follow at residues 20 to 45 (KHVT…HDLT) and 48 to 75 (KPAA…HCKP). The disordered stretch occupies residues 78 to 110 (NEEFSSPQMLPPSSPSPSTDPESSQPAPRPKTQ). Over residues 93 to 103 (SPSTDPESSQP) the composition is skewed to low complexity. The segment at 153 to 180 (ALRKQLCPYAAVGECRYGINCAYLHGDV) adopts a C3H1-type 3 zinc-finger fold. Residues 181–208 (CDMCGLQVLHPTDNSQRSQHTKACIEAH) form a makorin-type Cys-His region. The RING-type zinc finger occupies 226-280 (CGVCMEVVFEKANPSERRFGILSNCNHCYCLKCIRKWRSAKQFESKIIKSCPECR). Residues 309–338 (GMGRKPCRYFDEGRGICPFGANCFYKHAFP) form a C3H1-type 4 zinc finger.

The enzyme catalyses S-ubiquitinyl-[E2 ubiquitin-conjugating enzyme]-L-cysteine + [acceptor protein]-L-lysine = [E2 ubiquitin-conjugating enzyme]-L-cysteine + N(6)-ubiquitinyl-[acceptor protein]-L-lysine.. The protein operates within protein modification; protein ubiquitination. E3 ubiquitin ligase catalyzing the covalent attachment of ubiquitin moieties onto substrate proteins. In Tetraodon nigroviridis (Spotted green pufferfish), this protein is Probable E3 ubiquitin-protein ligase makorin-1.